We begin with the raw amino-acid sequence, 147 residues long: uncharacterized protein (147 aa).

This is an uncharacterized protein from Escherichia coli (strain K12).